The chain runs to 1070 residues: DNA-directed RNA polymerase subunit beta (1070 aa).

The protein belongs to the RNA polymerase beta chain family. In terms of assembly, in plastids the minimal PEP RNA polymerase catalytic core is composed of four subunits: alpha, beta, beta', and beta''. When a (nuclear-encoded) sigma factor is associated with the core the holoenzyme is formed, which can initiate transcription.

It is found in the plastid. Its subcellular location is the chloroplast. The catalysed reaction is RNA(n) + a ribonucleoside 5'-triphosphate = RNA(n+1) + diphosphate. Its function is as follows. DNA-dependent RNA polymerase catalyzes the transcription of DNA into RNA using the four ribonucleoside triphosphates as substrates. The polypeptide is DNA-directed RNA polymerase subunit beta (Populus trichocarpa (Western balsam poplar)).